A 228-amino-acid chain; its full sequence is ATP-dependent dethiobiotin synthetase BioD (228 aa).

Position 13–18 (13–18 (DIGKTF)) interacts with ATP. Thr17 provides a ligand contact to Mg(2+). The active site involves Lys38. Residue Ser42 coordinates substrate. Residues Asp55, 116 to 119 (EGSG), 179 to 180 (NK), and 208 to 210 (PKI) each bind ATP. Asp55 and Glu116 together coordinate Mg(2+).

Belongs to the dethiobiotin synthetase family. Homodimer. Requires Mg(2+) as cofactor.

It localises to the cytoplasm. The catalysed reaction is (7R,8S)-7,8-diammoniononanoate + CO2 + ATP = (4R,5S)-dethiobiotin + ADP + phosphate + 3 H(+). It functions in the pathway cofactor biosynthesis; biotin biosynthesis; biotin from 7,8-diaminononanoate: step 1/2. Its function is as follows. Catalyzes a mechanistically unusual reaction, the ATP-dependent insertion of CO2 between the N7 and N8 nitrogen atoms of 7,8-diaminopelargonic acid (DAPA, also called 7,8-diammoniononanoate) to form a ureido ring. This chain is ATP-dependent dethiobiotin synthetase BioD, found in Clostridium perfringens (strain ATCC 13124 / DSM 756 / JCM 1290 / NCIMB 6125 / NCTC 8237 / Type A).